The primary structure comprises 1275 residues: Membrane-associated guanylate kinase, WW and PDZ domain-containing protein 2 (1275 aa).

A PDZ 1 domain is found at glutamate 17–glycine 101. The 175-residue stretch at arginine 109–lysine 283 folds into the Guanylate kinase-like domain. The segment at leucine 203–aspartate 305 is disordered. Residues glutamate 280–glutamate 295 are compositionally biased toward basic and acidic residues. WW domains lie at aspartate 301–leucine 334 and asparagine 347–leucine 380. The tract at residues aspartate 301–leucine 380 is interaction with DDN. Tyrosine 361 carries the post-translational modification Phosphotyrosine. 2 consecutive PDZ domains span residues serine 425 to tyrosine 509 and threonine 604 to glycine 682. Position 685 is a phosphoserine (serine 685). Residues glutamate 698–aspartate 740 form a disordered region. Residues asparagine 699–serine 708 are compositionally biased toward polar residues. The region spanning aspartate 777–arginine 859 is the PDZ 4 domain. Residue tyrosine 826 is modified to Phosphotyrosine. Residues cysteine 868 to serine 912 form a disordered region. A phosphoserine mark is found at serine 883 and serine 884. A compositionally biased stretch (low complexity) spans serine 893 to proline 907. Residues aspartate 919–glutamate 1009 enclose the PDZ 5 domain. Positions glutamate 1010–alanine 1040 are enriched in polar residues. The disordered stretch occupies residues glutamate 1010–aspartate 1128. Residue serine 1013 is modified to Phosphoserine. Residues asparagine 1067–isoleucine 1083 show a composition bias toward basic and acidic residues. The 83-residue stretch at threonine 1139–threonine 1221 folds into the PDZ 6 domain.

This sequence belongs to the MAGUK family. Interacts (via its WW domains) with DRPLA. Interacts (via its second PDZ domain) with PTEN (via unphosphorylated C-terminus); this interaction diminishes the degradation rate of PTEN. Interacts (via guanylate kinase domain) with DLGAP1. Interacts (via the PDZ domains) with GRIN2A, GRID2 and NLGN1. Interacts with CTNND2, CTNNB1 and MAGUIN-1. Interacts with ACVR2A, SMAD2 and SMAD3. Part of a complex consisting of MAGI2/ARIP1, ACVR2A, ACVR1B and SMAD3. May interact with HTR2A. Interacts with RAPGEF2. Identified in a complex with ACTN4, CASK, IQGAP1, NPHS1, SPTAN1 and SPTBN1. Interacts with DDN. Found in a complex, at least composed of KIDINS220, MAGI2, NTRK1 and RAPGEF2; the complex is mainly formed at late endosomes in a NGF-dependent manner. Interacts with RAPGEF2; the interaction occurs before or after nerve growth factor (NGF) stimulation. Interacts (via PDZ domain) with KIDINS220 (via C-terminal domain). Interacts with IGSF9 and HTR4. Interacts with DLL1. Found in a complex with IGSF9B and NLGN2; the interaction with IGSF9B is mediated via the PDZ 5 and PDZ 6 domains, while the interaction with NLGN2 is mediated via the WW1, WW2 and PDZ2 domains. Interacts (via PDZ 6 domain) with USH1G (via SAM domain); the interaction is triggered by phosphorylation of USH1G by CK2 and negatively regulates MAGI2-mediated endocytosis. Expressed throughout the retina except in the nuclear layers and the photoreceptor outer segments (at protein level). Highest retinal expression is observed in the outer plexiform layer, the outer limiting membrane and the inner segment of photoreceptor cells (at protein level). Expressed in brain.

Its subcellular location is the cytoplasm. The protein resides in the late endosome. The protein localises to the synapse. It localises to the synaptosome. It is found in the cell membrane. Its subcellular location is the cytoskeleton. The protein resides in the microtubule organizing center. The protein localises to the centrosome. It localises to the cell projection. It is found in the cilium. Its subcellular location is the centriole. The protein resides in the photoreceptor inner segment. The protein localises to the photoreceptor outer segment. Seems to act as a scaffold molecule at synaptic junctions by assembling neurotransmitter receptors and cell adhesion proteins. Plays a role in nerve growth factor (NGF)-induced recruitment of RAPGEF2 to late endosomes and neurite outgrowth. May play a role in regulating activin-mediated signaling in neuronal cells. Enhances the ability of PTEN to suppress AKT1 activation. Plays a role in receptor-mediated clathrin-dependent endocytosis which is required for ciliogenesis. The sequence is that of Membrane-associated guanylate kinase, WW and PDZ domain-containing protein 2 (Magi2) from Mus musculus (Mouse).